Reading from the N-terminus, the 157-residue chain is Protein PEROXIN-4 (157 aa).

Residues 3–153 (ASRARLFKEY…AQMYTRLAAM (151 aa)) enclose the UBC core domain. Residue Cys90 is the Glycyl thioester intermediate of the active site.

It belongs to the ubiquitin-conjugating enzyme family. Interacts with PEX22.

It localises to the peroxisome membrane. The catalysed reaction is S-ubiquitinyl-[E1 ubiquitin-activating enzyme]-L-cysteine + [E2 ubiquitin-conjugating enzyme]-L-cysteine = [E1 ubiquitin-activating enzyme]-L-cysteine + S-ubiquitinyl-[E2 ubiquitin-conjugating enzyme]-L-cysteine.. It functions in the pathway protein modification; protein ubiquitination. Functionally, required for peroxisome biogenesis. Necessary for the developmental elimination of obsolete peroxisome matrix proteins. May be involved in the ubiquitination of PEX5, targeting it for recycling. Accepts the ubiquitin from the E1 complex and catalyzes its covalent attachment to other proteins. In Arabidopsis thaliana (Mouse-ear cress), this protein is Protein PEROXIN-4 (PEX4).